We begin with the raw amino-acid sequence, 73 residues long: UPF0150 protein ssl0259 (73 aa).

This sequence belongs to the UPF0150 family.

This Synechocystis sp. (strain ATCC 27184 / PCC 6803 / Kazusa) protein is UPF0150 protein ssl0259.